A 184-amino-acid polypeptide reads, in one-letter code: RNA 2',3'-cyclic phosphodiesterase (184 aa).

Histidine 40 acts as the Proton donor in catalysis. 2 short sequence motifs (HXTX) span residues 40–43 and 125–128; these read HITL. The Proton acceptor role is filled by histidine 125.

It belongs to the 2H phosphoesterase superfamily. ThpR family.

The catalysed reaction is a 3'-end 2',3'-cyclophospho-ribonucleotide-RNA + H2O = a 3'-end 2'-phospho-ribonucleotide-RNA + H(+). Functionally, hydrolyzes RNA 2',3'-cyclic phosphodiester to an RNA 2'-phosphomonoester. In vitro, ligates 5' and 3' half-tRNA molecules with 2',3'-cyclic phosphate and 5'-hydroxyl termini, respectively, to the product containing the 2'-5' phosphodiester linkage. Ligase activity requires GTP, but GTP hydrolysis is not required for the reaction, which is reversible. Ligase activity is weak compared to the phosphodiesterase activity. This is RNA 2',3'-cyclic phosphodiesterase from Pyrococcus furiosus (strain ATCC 43587 / DSM 3638 / JCM 8422 / Vc1).